Reading from the N-terminus, the 89-residue chain is UPF0223 protein BCG9842_B1176 (89 aa).

Belongs to the UPF0223 family.

This is UPF0223 protein BCG9842_B1176 from Bacillus cereus (strain G9842).